The following is a 1186-amino-acid chain: Pumilio homolog 1 (1186 aa).

Residue serine 2 is modified to N-acetylserine. Phosphoserine is present on serine 19. The tract at residues 22 to 73 is disordered; sequence LKHHPQEPANPNMPVVLTSGTGSQAQPQPAANQALAAGTHSSPVPGSIGVAG. Low complexity predominate over residues 45-58; sequence QAQPQPAANQALAA. 3 positions are modified to phosphoserine: serine 75, serine 98, and serine 106. Threonine 112 carries the phosphothreonine modification. Phosphoserine occurs at positions 124, 159, 197, 209, and 229. The disordered stretch occupies residues 233–272; sequence SCLRKGGFGPRDADSDENDKGEKKNKGTFDGDKLGDLKEE. Over residues 250–272 the composition is skewed to basic and acidic residues; sequence NDKGEKKNKGTFDGDKLGDLKEE. Serine 305 carries the phosphoserine modification. The span at 485–502 shows a compositional bias: low complexity; sequence TNSANQQTTPQAQQGQQQ. Disordered stretches follow at residues 485–524 and 613–648; these read TNSA…GQQT and AGTT…FYGN. Over residues 511–524 the composition is skewed to polar residues; the sequence is RPLTPNQNQQGQQT. Threonine 514 is subject to Phosphothreonine. Residues 626–639 are compositionally biased toward low complexity; sequence QQPQPQPQQQPNNN. Phosphoserine is present on residues serine 709 and serine 714. Residues 742 to 773 are disordered; the sequence is GPVGMPLPSQGPGHSQTPPPSLSSHGSSSSLN. The span at 763-773 shows a compositional bias: low complexity; it reads LSSHGSSSSLN. An Omega-N-methylarginine modification is found at arginine 796. Serine 806 and serine 822 each carry phosphoserine. The 341-residue stretch at 828-1168 folds into the PUM-HD domain; sequence GRSRLLEDFR…HILAKLEKYY (341 aa). Pumilio repeat units lie at residues 848–883, 884–919, 920–955, 956–991, 992–1027, 1028–1063, 1064–1099, and 1103–1142; these read EIAG…LVFN, EILQ…ALAE, RIRG…EMVR, ELDG…FIID, AFKG…PILE, ELHQ…KIVA, EIRG…VLID, and TMND…IVMH. An adenine-nucleotide binding in RNA target region spans residues 863-867; that stretch reads SRFIQ. The uracil-nucleotide binding in RNA target stretch occupies residues 899-903; it reads NYVIQ. Residues 935-939 form an adenine-nucleotide binding in RNA target region; the sequence is CRVIQ. The non-specific-nucleotide binding in RNA target stretch occupies residues 971–975; it reads NHVVQ. The tract at residues 1007 to 1011 is adenine-nucleotide binding in RNA target; it reads CRVIQ. The uracil-nucleotide binding in RNA target stretch occupies residues 1043-1047; that stretch reads NYVIQ. A guanine-nucleotide binding in RNA target region spans residues 1079–1083; that stretch reads SNVVE. Residues 1122–1126 are uracil-nucleotide binding in RNA target; that stretch reads NYVVQ.

In terms of assembly, recruits the CCR4-POP2-NOT deadenylase leading to translational inhibition and mRNA degradation. In case of viral infection, interacts with DHX58. Interacts with TRIM71 (via NHL repeats) in an RNA-dependent manner. In terms of processing, phosphorylation at Ser-714 promotes RNA-binding activity. Following growth factor stimulation phosphorylated at Ser-714, promoting binding to the 3'-UTR of CDKN1B/p27 mRNA. As to expression, expressed in brain, heart, kidney, muscle, intestine and stomach. Not expressed in cerebellum, corpus callosum, caudate nucleus, hippocampus, medulla oblongata and putamen. Expressed in all fetal tissues tested.

The protein localises to the cytoplasm. Its subcellular location is the P-body. It localises to the cytoplasmic granule. In terms of biological role, sequence-specific RNA-binding protein that acts as a post-transcriptional repressor by binding the 3'-UTR of mRNA targets. Binds to an RNA consensus sequence, the Pumilio Response Element (PRE), 5'-UGUANAUA-3', that is related to the Nanos Response Element (NRE). Mediates post-transcriptional repression of transcripts via different mechanisms: acts via direct recruitment of the CCR4-POP2-NOT deadenylase leading to translational inhibition and mRNA degradation. Also mediates deadenylation-independent repression by promoting accessibility of miRNAs. Following growth factor stimulation, phosphorylated and binds to the 3'-UTR of CDKN1B/p27 mRNA, inducing a local conformational change that exposes miRNA-binding sites, promoting association of miR-221 and miR-222, efficient suppression of CDKN1B/p27 expression, and rapid entry to the cell cycle. Acts as a post-transcriptional repressor of E2F3 mRNAs by binding to its 3'-UTR and facilitating miRNA regulation. Represses a program of genes necessary to maintain genomic stability such as key mitotic, DNA repair and DNA replication factors. Its ability to repress those target mRNAs is regulated by the lncRNA NORAD (non-coding RNA activated by DNA damage) which, due to its high abundance and multitude of PUMILIO binding sites, is able to sequester a significant fraction of PUM1 and PUM2 in the cytoplasm. Involved in neuronal functions by regulating ATXN1 mRNA levels: acts by binding to the 3'-UTR of ATXN1 transcripts, leading to their down-regulation independently of the miRNA machinery. Plays a role in cytoplasmic sensing of viral infection. In testis, acts as a post-transcriptional regulator of spermatogenesis by binding to the 3'-UTR of mRNAs coding for regulators of p53/TP53. Involved in embryonic stem cell renewal by facilitating the exit from the ground state: acts by targeting mRNAs coding for naive pluripotency transcription factors and accelerates their down-regulation at the onset of differentiation. Binds specifically to miRNA MIR199A precursor, with PUM2, regulates miRNA MIR199A expression at a postranscriptional level. This is Pumilio homolog 1 from Homo sapiens (Human).